Reading from the N-terminus, the 213-residue chain is Thymidylate kinase (213 aa).

10 to 17 (GLEGAGKT) is a binding site for ATP.

It belongs to the thymidylate kinase family.

The catalysed reaction is dTMP + ATP = dTDP + ADP. In terms of biological role, phosphorylation of dTMP to form dTDP in both de novo and salvage pathways of dTTP synthesis. The chain is Thymidylate kinase from Escherichia coli O6:K15:H31 (strain 536 / UPEC).